The primary structure comprises 539 residues: Phosphatidylinositol 4-phosphate 5-kinase type-1 beta (539 aa).

Residues 1-21 are disordered; the sequence is MSSTAENGDAVPGKQNEEKTY. Positions 25 to 395 constitute a PIPK domain; sequence ASSAIKGAIQ…RFLKFMNSRV (371 aa). 3 positions are modified to phosphoserine: Ser-445, Ser-447, and Ser-448.

In terms of assembly, interacts with RAC1, AJUBA, PLD1, PLD2 and ARF1. Highly expressed in brain and testis. Barely detectable in liver and skeletal muscle.

It localises to the cytoplasm. It is found in the cytosol. The protein localises to the cell membrane. The protein resides in the endomembrane system. The enzyme catalyses a 1,2-diacyl-sn-glycero-3-phospho-(1D-myo-inositol 4-phosphate) + ATP = a 1,2-diacyl-sn-glycero-3-phospho-(1D-myo-inositol-4,5-bisphosphate) + ADP + H(+). The catalysed reaction is 1-octadecanoyl-2-(5Z,8Z,11Z,14Z)-eicosatetraenoyl-sn-glycero-3-phospho-1D-myo-inositol 4-phosphate + ATP = 1-octadecanoyl-2-(5Z,8Z,11Z,14Z)-eicosatetraenoyl-sn-glycero-3-phospho-1D-myo-inositol 4,5-bisphosphate + ADP + H(+). It carries out the reaction 1-octadecanoyl-2-(9Z)-octadecenoyl-sn-glycero-3-phospho-1D-myo-inositol 4-phosphate + ATP = 1-octadecanoyl-2-(9Z)-octadecenoyl-sn-glycero-3-phospho-1D-myo-inositol 4,5-bisphosphate + ADP + H(+). It catalyses the reaction 1-octadecanoyl-2-(9Z)-octadecenoyl-sn-glycero-3-phospho-1D-myo-inositol + ATP = 1-octadecanoyl-2-(9Z)-octadecenoyl-sn-glycero-3-phospho-1D-myo-inositol 5-phosphate + ADP + H(+). The enzyme catalyses 1-octadecanoyl-2-(9Z,12Z)-octadecadienoyl-sn-glycero-3-phospho-1D-myo-inositol + ATP = 1-octadecanoyl-2-(9Z,12Z)-octadecadienoyl-sn-glycero-3-phospho-1D-myo-inositol 5-phosphate + ADP + H(+). The catalysed reaction is 1-octadecanoyl-2-(5Z,8Z,11Z,14Z-eicosatetraenoyl)-sn-glycero-3-phospho-(1D-myo-inositol) + ATP = 1-octadecanoyl-2-(5Z,8Z,11Z,14Z)-eicosatetraenoyl-sn-glycero-3-phospho-1D-myo-inositol 5-phosphate + ADP + H(+). It carries out the reaction 1,2-di-(9Z,12Z)-octadecadienoyl-sn-glycero-3-phospho-1D-myo-inositol + ATP = 1,2-di(9Z,12Z)-octadecadienoyl-sn-glycero-3-phospho-1D-myo-inositol 5-phosphate + ADP + H(+). With respect to regulation, activated by phosphatidic acid. In terms of biological role, catalyzes the phosphorylation of phosphatidylinositol 4-phosphate (PtdIns(4)P/PI4P) to form phosphatidylinositol 4,5-bisphosphate (PtdIns(4,5)P2/PIP2), a lipid second messenger that regulates several cellular processes such as signal transduction, vesicle trafficking, actin cytoskeleton dynamics, cell adhesion, and cell motility. PtdIns(4,5)P2 can directly act as a second messenger or can be utilized as a precursor to generate other second messengers: inositol 1,4,5-trisphosphate (IP3), diacylglycerol (DAG) or phosphatidylinositol-3,4,5-trisphosphate (PtdIns(3,4,5)P3/PIP3). Mediates RAC1-dependent reorganization of actin filaments. Contributes to the activation of phospholipase PLD2. Together with PIP5K1A, is required, after stimulation by G-protein coupled receptors, for the synthesis of IP3 that will induce stable platelet adhesion. The sequence is that of Phosphatidylinositol 4-phosphate 5-kinase type-1 beta from Mus musculus (Mouse).